A 31-amino-acid polypeptide reads, in one-letter code: Photosystem II reaction center protein T (31 aa).

Residues 3–23 (ALVYTFLLVTTLGILFFSIIF) form a helical membrane-spanning segment.

This sequence belongs to the PsbT family. PSII is composed of 1 copy each of membrane proteins PsbA, PsbB, PsbC, PsbD, PsbE, PsbF, PsbH, PsbI, PsbJ, PsbK, PsbL, PsbM, PsbT, PsbX, PsbY, PsbZ, Psb30/Ycf12, at least 3 peripheral proteins of the oxygen-evolving complex and a large number of cofactors. It forms dimeric complexes.

The protein localises to the plastid. It is found in the cyanelle thylakoid membrane. In terms of biological role, found at the monomer-monomer interface of the photosystem II (PS II) dimer, plays a role in assembly and dimerization of PSII. PSII is a light-driven water plastoquinone oxidoreductase, using light energy to abstract electrons from H(2)O, generating a proton gradient subsequently used for ATP formation. The chain is Photosystem II reaction center protein T from Cyanophora paradoxa.